We begin with the raw amino-acid sequence, 664 residues long: Xyloglucan-specific galacturonosyltransferase 1 (664 aa).

Residues 1–21 (MSLSKHLQKLVHKRESKKQPN) show a composition bias toward basic residues. A disordered region spans residues 1 to 49 (MSLSKHLQKLVHKRESKKQPNKKMPVSVSKLRRPRTSKKTETGNPEKTL). Topologically, residues 1-71 (MSLSKHLQKL…IFSARSFLYR (71 aa)) are cytoplasmic. The chain crosses the membrane as a helical; Signal-anchor for type II membrane protein span at residues 72–92 (VPLTILFLFLIYLWSTSTTVI). Over 93–664 (SGNVVHICIS…SLFKKIAKTV (572 aa)) the chain is Lumenal. N-linked (GlcNAc...) asparagine glycosylation is found at Asn-126, Asn-158, Asn-175, Asn-181, Asn-355, Asn-379, and Asn-522.

The protein belongs to the glycosyltransferase 47 family. In terms of tissue distribution, root hair specific. Expressed in roots and young leaves.

It is found in the golgi apparatus membrane. Its function is as follows. Xyloglucan-specific galacturonosyltransferase that forms the beta-D-galactosyluronic acid-(1-&gt;2)-alpha-D-xylosyl linkage. Required for root hair development probably by providing important acidic xyloglucans. The protein is Xyloglucan-specific galacturonosyltransferase 1 of Arabidopsis thaliana (Mouse-ear cress).